Consider the following 308-residue polypeptide: Glutaminase (308 aa).

Substrate contacts are provided by S66, N117, E161, N168, Y192, Y244, and V262.

This sequence belongs to the glutaminase family. In terms of assembly, homotetramer.

The enzyme catalyses L-glutamine + H2O = L-glutamate + NH4(+). This chain is Glutaminase, found in Salmonella choleraesuis (strain SC-B67).